Here is a 317-residue protein sequence, read N- to C-terminus: Apolipoprotein E (317 aa).

A signal peptide spans 1–18 (MKVLWAALLVTFLAGCQA). Repeat copies occupy residues 80-101 (TLMD…EQLS), 102-123 (PVAE…ARLG), 124-145 (ADME…AMLG), 146-167 (QSTE…KRLL), 168-189 (RDAD…EGAE), 190-211 (RGVS…VRAA), 212-233 (TVGS…ERLR), and 234-255 (ARME…EQVA). An 8 X 22 AA approximate tandem repeats region spans residues 80–255 (TLMDETMKEL…RLDEVKEQVA (176 aa)). Met143 bears the Methionine sulfoxide mark. A Phosphoserine modification is found at Ser147. An LDL and other lipoprotein receptors binding region spans residues 158–168 (HLRKLRKRLLR). 162 to 165 (LRKR) lines the heparin pocket. A lipid-binding and lipoprotein association region spans residues 210–290 (AATVGSLAGQ…SWFEPLVEDM (81 aa)). O-linked (GalNAc...) threonine glycosylation occurs at Thr212. 229–236 (GERLRARM) contributes to the heparin binding site. The homooligomerization stretch occupies residues 266 to 317 (QQISLQAEAFQARLKSWFEPLVEDMQRQWAGLVEKVQAAVGASTAPVPSDNH). The interval 278 to 290 (RLKSWFEPLVEDM) is specificity for association with VLDL.

The protein belongs to the apolipoprotein A1/A4/E family. As to quaternary structure, homotetramer. May interact with ABCA1; functionally associated with ABCA1 in the biogenesis of HDLs. May interact with APP/A4 amyloid-beta peptide; the interaction is extremely stable in vitro but its physiological significance is unclear. May interact with MAPT. May interact with MAP2. In the cerebrospinal fluid, interacts with secreted SORL1. Interacts with PMEL; this allows the loading of PMEL luminal fragment on ILVs to induce fibril nucleation. Post-translationally, APOE exists as multiple glycosylated and sialylated glycoforms within cells and in plasma. The extent of glycosylation and sialylation are tissue and context specific. Glycated in plasma VLDL. In terms of processing, phosphorylated by FAM20C in the extracellular medium.

The protein localises to the secreted. The protein resides in the extracellular space. Its subcellular location is the extracellular matrix. It localises to the extracellular vesicle. It is found in the endosome. The protein localises to the multivesicular body. Functionally, APOE is an apolipoprotein, a protein associating with lipid particles, that mainly functions in lipoprotein-mediated lipid transport between organs via the plasma and interstitial fluids. APOE is a core component of plasma lipoproteins and is involved in their production, conversion and clearance. Apolipoproteins are amphipathic molecules that interact both with lipids of the lipoprotein particle core and the aqueous environment of the plasma. As such, APOE associates with chylomicrons, chylomicron remnants, very low density lipoproteins (VLDL) and intermediate density lipoproteins (IDL) but shows a preferential binding to high-density lipoproteins (HDL). It also binds a wide range of cellular receptors including the LDL receptor/LDLR, the LDL receptor-related proteins LRP1, LRP2 and LRP8 and the very low-density lipoprotein receptor/VLDLR that mediate the cellular uptake of the APOE-containing lipoprotein particles. Finally, APOE also has a heparin-binding activity and binds heparan-sulfate proteoglycans on the surface of cells, a property that supports the capture and the receptor-mediated uptake of APOE-containing lipoproteins by cells. A main function of APOE is to mediate lipoprotein clearance through the uptake of chylomicrons, VLDLs, and HDLs by hepatocytes. APOE is also involved in the biosynthesis by the liver of VLDLs as well as their uptake by peripheral tissues ensuring the delivery of triglycerides and energy storage in muscle, heart and adipose tissues. By participating in the lipoprotein-mediated distribution of lipids among tissues, APOE plays a critical role in plasma and tissues lipid homeostasis. APOE is also involved in two steps of reverse cholesterol transport, the HDLs-mediated transport of cholesterol from peripheral tissues to the liver, and thereby plays an important role in cholesterol homeostasis. First, it is functionally associated with ABCA1 in the biogenesis of HDLs in tissues. Second, it is enriched in circulating HDLs and mediates their uptake by hepatocytes. APOE also plays an important role in lipid transport in the central nervous system, regulating neuron survival and sprouting. In Rhinopithecus roxellana (Golden snub-nosed monkey), this protein is Apolipoprotein E (APOE).